Consider the following 189-residue polypeptide: Imidazoleglycerol-phosphate dehydratase (189 aa).

Belongs to the imidazoleglycerol-phosphate dehydratase family.

It localises to the cytoplasm. It catalyses the reaction D-erythro-1-(imidazol-4-yl)glycerol 3-phosphate = 3-(imidazol-4-yl)-2-oxopropyl phosphate + H2O. It participates in amino-acid biosynthesis; L-histidine biosynthesis; L-histidine from 5-phospho-alpha-D-ribose 1-diphosphate: step 6/9. The chain is Imidazoleglycerol-phosphate dehydratase from Nautilia profundicola (strain ATCC BAA-1463 / DSM 18972 / AmH).